The chain runs to 638 residues: Plasma kallikrein (638 aa).

The N-terminal stretch at 1–19 is a signal peptide; that stretch reads MILFKQATYFISLFATVSC. 4 consecutive Apple domains span residues 21 to 104, 111 to 194, 201 to 284, and 292 to 375; these read CLTQ…LKQC, CHRD…LKPC, CHMN…LLTC, and CHSK…LRLC. 18 disulfides stabilise this stretch: C21–C104, C47–C77, C51–C57, C111–C194, C137–C166, C141–C147, C201–C284, C227–C256, C231–C237, C292–C375, C318–C347, C322–C328, C340–C345, C383–C503, C419–C435, C517–C584, C548–C563, and C574–C602. N127 is a glycosylation site (N-linked (GlcNAc...) asparagine). N308 carries N-linked (GlcNAc...) asparagine glycosylation. The Peptidase S1 domain maps to 391–626; that stretch reads IVGGTNSSWG…YMDWILEKTQ (236 aa). An N-linked (GlcNAc...) asparagine glycan is attached at N396. The active-site Charge relay system is H434. An N-linked (GlcNAc...) asparagine glycan is attached at N453. D483 functions as the Charge relay system in the catalytic mechanism. N-linked (GlcNAc...) asparagine glycosylation occurs at N494. Residue S578 is the Charge relay system of the active site.

Belongs to the peptidase S1 family. Plasma kallikrein subfamily. In terms of assembly, forms a heterodimer with SERPINA5. The zymogen is activated by factor XIIa, which cleaves the molecule into a light chain, which contains the active site, and a heavy chain, which associates with HMW kininogen. These chains are linked by one or more disulfide bonds. Interacts with iripin-3, a serine protease inhibitor from Ixodes ricinus saliva. Interacts with iripin-1, a serine protease inhibitor from Ixodes ricinus saliva. Found in plasma (at protein level).

It is found in the secreted. The enzyme catalyses Cleaves selectively Arg-|-Xaa and Lys-|-Xaa bonds, including Lys-|-Arg and Arg-|-Ser bonds in (human) kininogen to release bradykinin.. With respect to regulation, inhibited by SERPINA5. Its function is as follows. Participates in the surface-dependent activation of blood coagulation. Activates, in a reciprocal reaction, coagulation factor XII/F12 after binding to negatively charged surfaces. Releases bradykinin from HMW kininogen and may also play a role in the renin-angiotensin system by converting prorenin into renin. The chain is Plasma kallikrein (KLKB1) from Homo sapiens (Human).